A 261-amino-acid polypeptide reads, in one-letter code: 3-methyl-2-oxobutanoate hydroxymethyltransferase (261 aa).

Mg(2+) is bound by residues Asp42 and Asp81. 3-methyl-2-oxobutanoate is bound by residues 42–43 (DS), Asp81, and Lys110. Glu112 contacts Mg(2+). Glu179 acts as the Proton acceptor in catalysis.

The protein belongs to the PanB family. In terms of assembly, homodecamer; pentamer of dimers. The cofactor is Mg(2+).

The protein localises to the cytoplasm. It catalyses the reaction 3-methyl-2-oxobutanoate + (6R)-5,10-methylene-5,6,7,8-tetrahydrofolate + H2O = 2-dehydropantoate + (6S)-5,6,7,8-tetrahydrofolate. It participates in cofactor biosynthesis; coenzyme A biosynthesis. In terms of biological role, catalyzes the reversible reaction in which hydroxymethyl group from 5,10-methylenetetrahydrofolate is transferred onto alpha-ketoisovalerate to form ketopantoate. This chain is 3-methyl-2-oxobutanoate hydroxymethyltransferase, found in Pyrobaculum islandicum (strain DSM 4184 / JCM 9189 / GEO3).